A 295-amino-acid chain; its full sequence is Accessory protein VasW (295 aa).

Its function is as follows. Plays an accessory role in VasX-mediated bacterial killing. This chain is Accessory protein VasW, found in Vibrio cholerae serotype O1 (strain ATCC 39315 / El Tor Inaba N16961).